The sequence spans 485 residues: GTPase Obg (485 aa).

An Obg domain is found at 1–159 (MKFVDEVRIF…LTLRLELKLL (159 aa)). The OBG-type G domain occupies 160–332 (ADVGLLGFPN…LMDSVAEVLF (173 aa)). Residues 166 to 173 (GFPNAGKS), 191 to 195 (FTTLV), 213 to 216 (DIPG), 284 to 287 (NKLD), and 313 to 315 (SCA) each bind GTP. The Mg(2+) site is built by Ser173 and Thr193. Low complexity-rich tracts occupy residues 367-385 (AGAA…AAKK), 394-428 (RKAG…PVKK), 437-446 (RKSGTAPAKK), and 455-474 (RKSG…ATKR). Residues 367 to 485 (AGAAAATKSA…PARKSGGGRS (119 aa)) form a disordered region.

It belongs to the TRAFAC class OBG-HflX-like GTPase superfamily. OBG GTPase family. As to quaternary structure, monomer. Mg(2+) serves as cofactor.

It localises to the cytoplasm. In terms of biological role, an essential GTPase which binds GTP, GDP and possibly (p)ppGpp with moderate affinity, with high nucleotide exchange rates and a fairly low GTP hydrolysis rate. Plays a role in control of the cell cycle, stress response, ribosome biogenesis and in those bacteria that undergo differentiation, in morphogenesis control. This Myxococcus xanthus (strain DK1622) protein is GTPase Obg.